Reading from the N-terminus, the 156-residue chain is Putative increased recombination centers protein 11 (156 aa).

A helical transmembrane segment spans residues 20-42 (AALGATCLLHYLTTSLSIRFFFH).

It localises to the membrane. The sequence is that of Putative increased recombination centers protein 11 (IRC11) from Saccharomyces cerevisiae (strain ATCC 204508 / S288c) (Baker's yeast).